A 70-amino-acid chain; its full sequence is uncharacterized protein (70 aa).

A run of 2 helical transmembrane segments spans residues 19 to 39 (VIAL…VVGL) and 40 to 60 (LFKL…VRKF).

Its subcellular location is the cell membrane. This is an uncharacterized protein from Streptomyces coelicolor (strain ATCC BAA-471 / A3(2) / M145).